Consider the following 554-residue polypeptide: CTP synthase (554 aa).

An amidoligase domain region spans residues 1-265 (MTPLIFVTGG…DELVIDQFKL (265 aa)). Ser-13 provides a ligand contact to CTP. Ser-13 contacts UTP. ATP is bound by residues 14 to 19 (SLGKGI) and Asp-71. 2 residues coordinate Mg(2+): Asp-71 and Glu-139. CTP contacts are provided by residues 146-148 (DIE), 186-191 (KTKPTQ), and Lys-222. Residues 186 to 191 (KTKPTQ) and Lys-222 contribute to the UTP site. The Glutamine amidotransferase type-1 domain maps to 292–545 (NIAVVGKYVD…VRAAREKKAG (254 aa)). Residue Gly-353 coordinates L-glutamine. The active-site Nucleophile; for glutamine hydrolysis is Cys-380. Residues 381–384 (YGMQ), Glu-404, and Arg-471 contribute to the L-glutamine site. Catalysis depends on residues His-518 and Glu-520.

Belongs to the CTP synthase family. Homotetramer.

It carries out the reaction UTP + L-glutamine + ATP + H2O = CTP + L-glutamate + ADP + phosphate + 2 H(+). The catalysed reaction is L-glutamine + H2O = L-glutamate + NH4(+). It catalyses the reaction UTP + NH4(+) + ATP = CTP + ADP + phosphate + 2 H(+). The protein operates within pyrimidine metabolism; CTP biosynthesis via de novo pathway; CTP from UDP: step 2/2. Allosterically activated by GTP, when glutamine is the substrate; GTP has no effect on the reaction when ammonia is the substrate. The allosteric effector GTP functions by stabilizing the protein conformation that binds the tetrahedral intermediate(s) formed during glutamine hydrolysis. Inhibited by the product CTP, via allosteric rather than competitive inhibition. Catalyzes the ATP-dependent amination of UTP to CTP with either L-glutamine or ammonia as the source of nitrogen. Regulates intracellular CTP levels through interactions with the four ribonucleotide triphosphates. This is CTP synthase from Xanthomonas axonopodis pv. citri (strain 306).